We begin with the raw amino-acid sequence, 29 residues long: Serum amyloid P-component (29 aa).

Residues 6–29 (LGKVFVFSKESNVDDVKLLTPQTE) enclose the Pentraxin (PTX) domain.

The protein belongs to the pentraxin family. In terms of assembly, homopentamer. Pentraxin (or pentaxin) have a discoid arrangement of 5 non-covalently bound subunits. Ca(2+) serves as cofactor.

The protein localises to the secreted. The chain is Serum amyloid P-component from Hippoglossus hippoglossus (Atlantic halibut).